Here is a 165-residue protein sequence, read N- to C-terminus: Chorismate pyruvate-lyase (165 aa).

Substrate contacts are provided by M35, R77, L115, and E156.

Belongs to the UbiC family. Monomer.

It localises to the cytoplasm. The catalysed reaction is chorismate = 4-hydroxybenzoate + pyruvate. The protein operates within cofactor biosynthesis; ubiquinone biosynthesis. Its function is as follows. Removes the pyruvyl group from chorismate, with concomitant aromatization of the ring, to provide 4-hydroxybenzoate (4HB) for the ubiquinone pathway. The polypeptide is Chorismate pyruvate-lyase (Salmonella enteritidis PT4 (strain P125109)).